Consider the following 362-residue polypeptide: Anthranilate phosphoribosyltransferase (362 aa).

5-phospho-alpha-D-ribose 1-diphosphate-binding positions include Gly-96, 99 to 100 (GD), Thr-104, 106 to 109 (NIST), 124 to 132 (KHGNRAASS), and Gly-136. Residue Gly-96 participates in anthranilate binding. Ser-108 provides a ligand contact to Mg(2+). Asn-127 contacts anthranilate. Arg-182 contacts anthranilate. Residues Asp-240 and Glu-241 each coordinate Mg(2+).

It belongs to the anthranilate phosphoribosyltransferase family. As to quaternary structure, homodimer. Mg(2+) serves as cofactor.

It carries out the reaction N-(5-phospho-beta-D-ribosyl)anthranilate + diphosphate = 5-phospho-alpha-D-ribose 1-diphosphate + anthranilate. It participates in amino-acid biosynthesis; L-tryptophan biosynthesis; L-tryptophan from chorismate: step 2/5. In terms of biological role, catalyzes the transfer of the phosphoribosyl group of 5-phosphorylribose-1-pyrophosphate (PRPP) to anthranilate to yield N-(5'-phosphoribosyl)-anthranilate (PRA). This chain is Anthranilate phosphoribosyltransferase, found in Rhodococcus opacus (strain B4).